The chain runs to 355 residues: C-C chemokine receptor type 1 (355 aa).

Residues 1 to 34 lie on the Extracellular side of the membrane; that stretch reads METPNTTEDYDTTTEFDYGDATPCQKVNERAFGA. A glycan (N-linked (GlcNAc...) asparagine) is linked at Asn-5. 2 disulfide bridges follow: Cys-24–Cys-273 and Cys-106–Cys-183. The chain crosses the membrane as a helical span at residues 35-60; it reads QLLPPLYSLVFVIGLVGNILVVLVLV. Residues 61-64 are Cytoplasmic-facing; it reads QYKR. Residues 65-91 traverse the membrane as a helical segment; that stretch reads LKNMTSIYLLNLAISDLLFLFTLPFWI. At 92–107 the chain is on the extracellular side; it reads DYKLKDDWVFGDAMCK. Residues 108–129 traverse the membrane as a helical segment; the sequence is ILSGFYYTGLYSEIFFIILLTI. The Cytoplasmic segment spans residues 130–146; sequence DRYLAIVHAVFALRART. The helical transmembrane segment at 147–171 threads the bilayer; the sequence is VTFGVITSIIIWALAILASMPGLYF. The Extracellular segment spans residues 172-197; sequence SKTQWEFTHHTCSLHFPHESLREWKL. Residues 198–223 form a helical membrane-spanning segment; that stretch reads FQALKLNLFGLVLPLLVMIICYTGII. Residues 224-239 lie on the Cytoplasmic side of the membrane; that stretch reads KILLRRPNEKKSKAVR. The chain crosses the membrane as a helical span at residues 240–264; the sequence is LIFVIMIIFFLFWTPYNLTILISVF. At 265–281 the chain is on the extracellular side; it reads QDFLFTHECEQSRHLDL. The chain crosses the membrane as a helical span at residues 282–305; the sequence is AVQVTEVIAYTHCCVNPVIYAFVG. Residues 306–355 are Cytoplasmic-facing; sequence ERFRKYLRQLFHRRVAVHLVKWLPFLSVDRLERVSSTSPSTGEHELSAGF.

Belongs to the G-protein coupled receptor 1 family. In terms of assembly, interacts with CREB3. Interacts with CCL3. Interacts with CCL15. Interacts with CCL23. Interacts with GNAI1. Interacts with PF4/CXCL4. Widely expressed in different hematopoietic cells.

The protein localises to the cell membrane. Functionally, chemokine receptor that plays a crucial role in regulating immune cell migration, inflammation, and immune responses. Contributes to the inflammatory response by recruiting immune cells, such as monocytes, macrophages, T-cells, and dendritic cells, to sites of inflammation for the clearance of pathogens and the resolution of tissue damage. When activated by its ligands including CCL3, CCL5-9, CCL13-16 and CCL23, triggers a signaling cascade within immune cells, leading to their migration towards the source of the chemokine. For example, mediates neutrophil migration after activation by CCL3 leading to the sequential release of TNF-alpha and leukotriene B4. Also mediates monocyte migration upon CXCL4 binding. Activation by CCL5 results in neuroinflammation through the ERK1/2 signaling pathway. This chain is C-C chemokine receptor type 1 (CCR1), found in Homo sapiens (Human).